The chain runs to 232 residues: Orotidine 5'-phosphate decarboxylase (232 aa).

Residues aspartate 11, lysine 33, 60–69 (DLKFHDIPNT), threonine 120, arginine 181, glutamine 190, glycine 210, and arginine 211 each bind substrate. The Proton donor role is filled by lysine 62.

It belongs to the OMP decarboxylase family. Type 1 subfamily. Homodimer.

The catalysed reaction is orotidine 5'-phosphate + H(+) = UMP + CO2. The protein operates within pyrimidine metabolism; UMP biosynthesis via de novo pathway; UMP from orotate: step 2/2. Functionally, catalyzes the decarboxylation of orotidine 5'-monophosphate (OMP) to uridine 5'-monophosphate (UMP). The protein is Orotidine 5'-phosphate decarboxylase of Vibrio vulnificus (strain YJ016).